A 584-amino-acid chain; its full sequence is WD repeat-containing protein JIP5 (584 aa).

WD repeat units lie at residues 128 to 173 (RHKG…GKVD), 180 to 219 (SAKD…GTNK), 269 to 314 (DQED…LADQ), and 378 to 415 (DAVD…DQEE). Disordered regions lie at residues 409 to 497 (YSDD…SEYI) and 516 to 563 (KKLI…EKKV). 2 stretches are compositionally biased toward acidic residues: residues 412 to 429 (DQEE…EEDS) and 450 to 460 (FDSENNDDGEE). Composition is skewed to basic and acidic residues over residues 483–493 (TRNEENKDNTK) and 528–552 (SKKE…EVPQ).

This sequence belongs to the WD repeat WDR55 family.

Its subcellular location is the nucleus. The protein localises to the nucleolus. This is WD repeat-containing protein JIP5 (JIP5) from Lodderomyces elongisporus (strain ATCC 11503 / CBS 2605 / JCM 1781 / NBRC 1676 / NRRL YB-4239) (Yeast).